The primary structure comprises 406 residues: Tryptophan synthase beta chain (406 aa).

The residue at position 99 (Lys-99) is an N6-(pyridoxal phosphate)lysine.

It belongs to the TrpB family. Tetramer of two alpha and two beta chains. It depends on pyridoxal 5'-phosphate as a cofactor.

It carries out the reaction (1S,2R)-1-C-(indol-3-yl)glycerol 3-phosphate + L-serine = D-glyceraldehyde 3-phosphate + L-tryptophan + H2O. It functions in the pathway amino-acid biosynthesis; L-tryptophan biosynthesis; L-tryptophan from chorismate: step 5/5. Its function is as follows. The beta subunit is responsible for the synthesis of L-tryptophan from indole and L-serine. This is Tryptophan synthase beta chain from Rhizobium leguminosarum bv. trifolii (strain WSM2304).